The following is a 114-amino-acid chain: Beta-microseminoprotein E1 (114 aa).

Positions 1–20 are cleaved as a signal peptide; the sequence is MNVLLGGLVIFATFVTLCNG. Cystine bridges form between Cys22–Cys70, Cys38–Cys62, Cys57–Cys93, Cys60–Cys69, and Cys84–Cys107.

The protein belongs to the beta-microseminoprotein family.

It is found in the secreted. In Saguinus oedipus (Cotton-top tamarin), this protein is Beta-microseminoprotein E1 (MSPE).